Reading from the N-terminus, the 130-residue chain is Glycine cleavage system H protein (130 aa).

A Lipoyl-binding domain is found at 25–106 (MALIGISDFA…PFDSWMIKVK (82 aa)). At Lys66 the chain carries N6-lipoyllysine.

This sequence belongs to the GcvH family. The glycine cleavage system is composed of four proteins: P, T, L and H. Requires (R)-lipoate as cofactor.

Functionally, the glycine cleavage system catalyzes the degradation of glycine. The H protein shuttles the methylamine group of glycine from the P protein to the T protein. This Leptospira interrogans serogroup Icterohaemorrhagiae serovar copenhageni (strain Fiocruz L1-130) protein is Glycine cleavage system H protein.